Consider the following 421-residue polypeptide: MDCTKDYCVKDISLAPSGEKKIDWVSRFMPVLQHIRKDFEERKPFKGVRIAATLHLEMKTAFLLLTLKAAGAEVSAAASNPLSTQDDVVAALAKAGVKVYAIRGEDREQYYEFMHKALDVKPNIIIDDGADMVSTVLKERQELIPEIWGASEETTTGVIRLRAMEKDGVLKFPIIAVNDSYTKYLFDNRYGTGQSTWDGIIRTTNLLVAGKNVVVVGYGWCGRGIAMRARGLGATVIVVEVDPIRALEARMDGFLVMDMMEAAKVGDIFITATGDINCIRKEHFELMKDGAILANAGHFDVEISKPDLEALAVEISEPRPNITEYKMADGRRLYLLAEGRLVNLAAADGHPAEIMDMSFALQAKAAEYIKENRGRLEPKVYVLPREIDEMVARIKLASMGIKIEELTEEQKKYLESWEHGT.

Positions 128 and 153 each coordinate substrate. Position 154–156 (154–156 (TTT)) interacts with NAD(+). Lys-183 and Asp-187 together coordinate substrate. NAD(+) is bound by residues Asn-188, 217 to 222 (GYGWCG), Glu-240, 296 to 298 (AGH), and Asn-343.

It belongs to the adenosylhomocysteinase family. Requires NAD(+) as cofactor.

It localises to the cytoplasm. The catalysed reaction is S-adenosyl-L-homocysteine + H2O = L-homocysteine + adenosine. It functions in the pathway amino-acid biosynthesis; L-homocysteine biosynthesis; L-homocysteine from S-adenosyl-L-homocysteine: step 1/1. Its function is as follows. May play a key role in the regulation of the intracellular concentration of adenosylhomocysteine. The protein is Adenosylhomocysteinase of Thermococcus kodakarensis (strain ATCC BAA-918 / JCM 12380 / KOD1) (Pyrococcus kodakaraensis (strain KOD1)).